We begin with the raw amino-acid sequence, 104 residues long: Pterin-4-alpha-carbinolamine dehydratase (104 aa).

Position 2 is an N-acetylalanine (alanine 2). Substrate is bound by residues 61 to 63 (DHH) and 78 to 81 (STHE).

Belongs to the pterin-4-alpha-carbinolamine dehydratase family. Homotetramer and homodimer. Heterotetramer with HNF1A; formed by a dimer of dimers. Interacts with HNF1B (via HNF-p1 domain); the interaction increases HNF1B transactivation activity. As to expression, mainly expressed in the liver, in pancreatic cells, and in the kidney, especially in the distal convoluted tubule, in the cortical thick ascending limb of Henle's loop and in the connecting tubule.

Its subcellular location is the cytoplasm. It localises to the nucleus. It catalyses the reaction (4aS,6R)-4a-hydroxy-L-erythro-5,6,7,8-tetrahydrobiopterin = (6R)-L-erythro-6,7-dihydrobiopterin + H2O. Functionally, involved in tetrahydrobiopterin biosynthesis. Seems to both prevent the formation of 7-pterins and accelerate the formation of quinonoid-BH2. Coactivator for HNF1A-dependent transcription. Regulates the dimerization of homeodomain protein HNF1A and enhances its transcriptional activity. Also acts as a coactivator for HNF1B-dependent transcription. This chain is Pterin-4-alpha-carbinolamine dehydratase (Pcbd1), found in Mus musculus (Mouse).